A 500-amino-acid chain; its full sequence is Kynurenine 3-monooxygenase (500 aa).

It belongs to the aromatic-ring hydroxylase family. KMO subfamily. It depends on FAD as a cofactor.

The protein resides in the mitochondrion outer membrane. It carries out the reaction L-kynurenine + NADPH + O2 + H(+) = 3-hydroxy-L-kynurenine + NADP(+) + H2O. It participates in cofactor biosynthesis; NAD(+) biosynthesis; quinolinate from L-kynurenine: step 1/3. Functionally, catalyzes the hydroxylation of L-kynurenine (L-Kyn) to form 3-hydroxy-L-kynurenine (L-3OHKyn). Required for synthesis of quinolinic acid. The polypeptide is Kynurenine 3-monooxygenase (bna4) (Aspergillus terreus (strain NIH 2624 / FGSC A1156)).